Consider the following 98-residue polypeptide: Large ribosomal subunit protein uL23 (98 aa).

This sequence belongs to the universal ribosomal protein uL23 family. Part of the 50S ribosomal subunit. Contacts protein L29, and trigger factor when it is bound to the ribosome.

Its function is as follows. One of the early assembly proteins it binds 23S rRNA. One of the proteins that surrounds the polypeptide exit tunnel on the outside of the ribosome. Forms the main docking site for trigger factor binding to the ribosome. The chain is Large ribosomal subunit protein uL23 from Rickettsia typhi (strain ATCC VR-144 / Wilmington).